A 523-amino-acid chain; its full sequence is MAINQAHVHPHYTLPGVMHYLQTEFTKNERDRITWELERSEMKARIAELEGENRDLKHQLNQIQSKAVSPEGEKEEKHVPDSLLQSKLAVQENVKEIIYLLKGPNTVNQLESLNSREAGSELHDLEKLNVNTPKEEGSAKTNGMDILNNALLDTKPNPKQGPSESPSPTKVKSLFSTANKRENNETISKIHSELSKVDIISSYGDCMALYDADTKSLEIHQVDANLNSKLLKKISLGQDSDIMKFFWVSTSKLLVIEKSFHLKLFSISSASLISDVDLLQDSEQPFSSSDIINIDFKNKWLLIASKNKSQIRIWELDNIEAPEDVPINIKETYEITHDNDDDDSNDSTNILDCILGITEKSLILLSSNPYQLTIYDFEGKLLQKIDLKIDTILSGKPEEEGYHLFLDRKTSKLLIQLSNERLLVYSFDKKKVVLKEQLTPSSTLPIQLDLNDSIITVSYSNGDFEFRNLENLKPSIDEFVVADINFSERKEPVVFSSNLIVDSTPVLITVNKNNEVLLHKIKI.

A coiled-coil region spans residues 26–76 (TKNERDRITWELERSEMKARIAELEGENRDLKHQLNQIQSKAVSPEGEKEE). Positions 61 to 80 (NQIQSKAVSPEGEKEEKHVP) are disordered. Residues 71 to 80 (EGEKEEKHVP) are compositionally biased toward basic and acidic residues. Position 115 is a phosphoserine (S115). T132 carries the phosphothreonine modification. Residues 150-171 (ALLDTKPNPKQGPSESPSPTKV) are disordered. Positions 160 to 171 (QGPSESPSPTKV) are enriched in polar residues.

In terms of assembly, component of a complex at least composed of FAR3, FAR7, FAR8, FAR10, FAR11 and VPS64.

The protein resides in the cytoplasm. It localises to the endoplasmic reticulum. In terms of biological role, participates in the control of the reentry into the cell cycle following pheromone treatment. This chain is Factor arrest protein 8 (FAR8), found in Saccharomyces cerevisiae (strain ATCC 204508 / S288c) (Baker's yeast).